Consider the following 256-residue polypeptide: MNTSSRITYFIIGGSRGIGFNLVKILSASTGNTVITSIRGSPSLPKNKQVEDLAKIRKNIHIVQLDLTKDESIGNIADEIKKTPFFLGIDIFIACSAVSDSYYKVLETPKSVWLNHYSTNALGPILALQKVYPLLLLKKTRKIFFISSVAGSINAFVPLSVSAYGQSKAALNYAVKTLSFELKPEGFTVVAFHPGMVSTDMGQYGLDHFKEKNIDISGVNIITPEESASALIDVFRKILPEDNGKFFNYDGSEGVF.

8 residues coordinate NADP(+): I18, S37, K46, D66, Y164, K168, V197, and T199. Residue Y164 is the Proton donor of the active site. K168 acts as the Lowers pKa of active site Tyr in catalysis.

Belongs to the short-chain dehydrogenases/reductases (SDR) family.

It is found in the cytoplasm. This is an uncharacterized protein from Saccharomyces cerevisiae (strain ATCC 204508 / S288c) (Baker's yeast).